A 147-amino-acid polypeptide reads, in one-letter code: Large ribosomal subunit protein uL15 (147 aa).

Basic residues predominate over residues 1-15 (MTDRVKKTRKLRGHV). Residues 1–34 (MTDRVKKTRKLRGHVSHGYGRVGKHRKHSGGRGL) form a disordered region.

The protein belongs to the universal ribosomal protein uL15 family.

In Encephalitozoon cuniculi (strain GB-M1) (Microsporidian parasite), this protein is Large ribosomal subunit protein uL15 (RPL27A).